The following is a 56-amino-acid chain: Ribosome biogenesis protein Nop10 (56 aa).

The protein belongs to the NOP10 family.

Involved in ribosome biogenesis; more specifically in 18S rRNA pseudouridylation and in cleavage of pre-rRNA. The polypeptide is Ribosome biogenesis protein Nop10 (Methanococcoides burtonii (strain DSM 6242 / NBRC 107633 / OCM 468 / ACE-M)).